A 289-amino-acid polypeptide reads, in one-letter code: Urease accessory protein UreD (289 aa).

It belongs to the UreD family. In terms of assembly, ureD, UreF and UreG form a complex that acts as a GTP-hydrolysis-dependent molecular chaperone, activating the urease apoprotein by helping to assemble the nickel containing metallocenter of UreC. The UreE protein probably delivers the nickel.

Its subcellular location is the cytoplasm. Functionally, required for maturation of urease via the functional incorporation of the urease nickel metallocenter. The protein is Urease accessory protein UreD of Magnetococcus marinus (strain ATCC BAA-1437 / JCM 17883 / MC-1).